Reading from the N-terminus, the 432-residue chain is Trigger factor (432 aa).

In terms of domain architecture, PPIase FKBP-type spans Glu161–Pro246.

It belongs to the FKBP-type PPIase family. Tig subfamily.

It localises to the cytoplasm. The catalysed reaction is [protein]-peptidylproline (omega=180) = [protein]-peptidylproline (omega=0). Functionally, involved in protein export. Acts as a chaperone by maintaining the newly synthesized protein in an open conformation. Functions as a peptidyl-prolyl cis-trans isomerase. The polypeptide is Trigger factor (Cronobacter sakazakii (strain ATCC BAA-894) (Enterobacter sakazakii)).